We begin with the raw amino-acid sequence, 120 residues long: Cytochrome c6 (120 aa).

The first 35 residues, 1 to 35 (MFKLFNQASRIFFGIALPCLIFLGGIFSLGNTALA), serve as a signal peptide directing secretion. Residues C49, C52, H53, and M93 each contribute to the heme c site.

Belongs to the cytochrome c family. PetJ subfamily. Monomer. In terms of processing, binds 1 heme c group covalently per subunit.

The protein resides in the cellular thylakoid lumen. Functionally, functions as an electron carrier between membrane-bound cytochrome b6-f and photosystem I in oxygenic photosynthesis. The protein is Cytochrome c6 (petJ) of Synechocystis sp. (strain ATCC 27184 / PCC 6803 / Kazusa).